Here is a 239-residue protein sequence, read N- to C-terminus: Enolase-phosphatase E1 (239 aa).

Belongs to the HAD-like hydrolase superfamily. MasA/MtnC family. As to quaternary structure, monomer. Mg(2+) serves as cofactor.

It catalyses the reaction 5-methylsulfanyl-2,3-dioxopentyl phosphate + H2O = 1,2-dihydroxy-5-(methylsulfanyl)pent-1-en-3-one + phosphate. Its pathway is amino-acid biosynthesis; L-methionine biosynthesis via salvage pathway; L-methionine from S-methyl-5-thio-alpha-D-ribose 1-phosphate: step 3/6. The protein operates within amino-acid biosynthesis; L-methionine biosynthesis via salvage pathway; L-methionine from S-methyl-5-thio-alpha-D-ribose 1-phosphate: step 4/6. In terms of biological role, bifunctional enzyme that catalyzes the enolization of 2,3-diketo-5-methylthiopentyl-1-phosphate (DK-MTP-1-P) into the intermediate 2-hydroxy-3-keto-5-methylthiopentenyl-1-phosphate (HK-MTPenyl-1-P), which is then dephosphorylated to form the acireductone 1,2-dihydroxy-3-keto-5-methylthiopentene (DHK-MTPene). In Streptomyces avermitilis (strain ATCC 31267 / DSM 46492 / JCM 5070 / NBRC 14893 / NCIMB 12804 / NRRL 8165 / MA-4680), this protein is Enolase-phosphatase E1.